The primary structure comprises 151 residues: uncharacterized protein (151 aa).

Residues 11 to 118 form the KilA-N domain; the sequence is NFCKLSYEDI…LKVVKFINSY (108 aa).

This is an uncharacterized protein from Fowlpox virus (strain NVSL) (FPV).